Reading from the N-terminus, the 404-residue chain is Probable tRNA sulfurtransferase (404 aa).

The THUMP domain occupies 60-165 (TAVAESLKQV…EEAAYLSYET (106 aa)). ATP is bound by residues 183–184 (ML), 208–209 (HF), Arg265, Gly287, and Gln296.

The protein belongs to the ThiI family.

It is found in the cytoplasm. The catalysed reaction is [ThiI sulfur-carrier protein]-S-sulfanyl-L-cysteine + a uridine in tRNA + 2 reduced [2Fe-2S]-[ferredoxin] + ATP + H(+) = [ThiI sulfur-carrier protein]-L-cysteine + a 4-thiouridine in tRNA + 2 oxidized [2Fe-2S]-[ferredoxin] + AMP + diphosphate. It catalyses the reaction [ThiS sulfur-carrier protein]-C-terminal Gly-Gly-AMP + S-sulfanyl-L-cysteinyl-[cysteine desulfurase] + AH2 = [ThiS sulfur-carrier protein]-C-terminal-Gly-aminoethanethioate + L-cysteinyl-[cysteine desulfurase] + A + AMP + 2 H(+). The protein operates within cofactor biosynthesis; thiamine diphosphate biosynthesis. Its function is as follows. Catalyzes the ATP-dependent transfer of a sulfur to tRNA to produce 4-thiouridine in position 8 of tRNAs, which functions as a near-UV photosensor. Also catalyzes the transfer of sulfur to the sulfur carrier protein ThiS, forming ThiS-thiocarboxylate. This is a step in the synthesis of thiazole, in the thiamine biosynthesis pathway. The sulfur is donated as persulfide by IscS. In Streptococcus pneumoniae serotype 19F (strain G54), this protein is Probable tRNA sulfurtransferase.